The primary structure comprises 177 residues: Ribosome maturation factor RimP (177 aa).

The protein belongs to the RimP family.

It is found in the cytoplasm. Its function is as follows. Required for maturation of 30S ribosomal subunits. This chain is Ribosome maturation factor RimP, found in Mycobacterium marinum (strain ATCC BAA-535 / M).